Here is a 426-residue protein sequence, read N- to C-terminus: 3-phosphoshikimate 1-carboxyvinyltransferase (426 aa).

Positions 23, 24, and 28 each coordinate 3-phosphoshikimate. Lys-23 is a phosphoenolpyruvate binding site. Phosphoenolpyruvate is bound by residues Gly-96 and Arg-124. Thr-170, Ser-171, Gln-172, Ser-198, Asp-314, and Lys-341 together coordinate 3-phosphoshikimate. A phosphoenolpyruvate-binding site is contributed by Gln-172. Catalysis depends on Asp-314, which acts as the Proton acceptor. Phosphoenolpyruvate-binding residues include Arg-345, Arg-386, and Lys-411.

Belongs to the EPSP synthase family. In terms of assembly, monomer.

Its subcellular location is the cytoplasm. It catalyses the reaction 3-phosphoshikimate + phosphoenolpyruvate = 5-O-(1-carboxyvinyl)-3-phosphoshikimate + phosphate. It participates in metabolic intermediate biosynthesis; chorismate biosynthesis; chorismate from D-erythrose 4-phosphate and phosphoenolpyruvate: step 6/7. In terms of biological role, catalyzes the transfer of the enolpyruvyl moiety of phosphoenolpyruvate (PEP) to the 5-hydroxyl of shikimate-3-phosphate (S3P) to produce enolpyruvyl shikimate-3-phosphate and inorganic phosphate. This is 3-phosphoshikimate 1-carboxyvinyltransferase from Nostoc punctiforme (strain ATCC 29133 / PCC 73102).